The following is a 793-amino-acid chain: Sucrose synthase (793 aa).

The segment at Met-263–Thr-742 is GT-B glycosyltransferase.

It belongs to the glycosyltransferase 1 family. Homotetramer.

It catalyses the reaction an NDP-alpha-D-glucose + D-fructose = a ribonucleoside 5'-diphosphate + sucrose + H(+). The enzyme catalyses ADP-alpha-D-glucose + D-fructose = sucrose + ADP + H(+). In terms of biological role, catalyzes the reversible conversion of sucrose and a nucleotide disphosphate (NDP) into fructose and NDP-glucose; although the reaction is freely reversible in vitro, the physiological reaction seems to be sucrose cleavage. Unlike characterized plant enzymes prefers ADP as a cosubstrate, whereas plants prefer UDP. The KM for sucrose is 45-fold lower in the presence of ADP than UDP. Its preference for ADP over UDP suggests it may directly link sucrose and glycogen metabolism. The protein is Sucrose synthase of Acidithiobacillus caldus (strain ATCC 51756 / DSM 8584 / KU).